The chain runs to 244 residues: MAATCCWGRSGLSSLTRALLEAEKRQCRALVRTGKKPQGIRYLSSCGILASRCPKLPRPASPAHIQGRTFLNLAAPLLGSKRIEYSESKVLGFSIEQMYDIVADVQNYKIFVPWCNRSKVLSCKKGVTRAELEVGFPPVVERYVSEISVIPLHQVRAVCCDGKLFNHLETVWRFSPGLSGRPDTCTLDFCVSFEFKSLLHSHLASVFFDEVVKQMVCAFEKQAGRIYGRQEVPLAAAAKLRAMR.

It belongs to the COQ10 family. In terms of assembly, interacts with coenzyme Q.

It localises to the mitochondrion inner membrane. Required for the function of coenzyme Q in the respiratory chain. May serve as a chaperone or may be involved in the transport of Q6 from its site of synthesis to the catalytic sites of the respiratory complexes. The protein is Coenzyme Q-binding protein COQ10 homolog B, mitochondrial (coq10b) of Xenopus laevis (African clawed frog).